The following is a 184-amino-acid chain: Large ribosomal subunit protein uL6 (184 aa).

It belongs to the universal ribosomal protein uL6 family. As to quaternary structure, part of the 50S ribosomal subunit.

Functionally, this protein binds to the 23S rRNA, and is important in its secondary structure. It is located near the subunit interface in the base of the L7/L12 stalk, and near the tRNA binding site of the peptidyltransferase center. The polypeptide is Large ribosomal subunit protein uL6 (Thermococcus gammatolerans (strain DSM 15229 / JCM 11827 / EJ3)).